Reading from the N-terminus, the 63-residue chain is Large ribosomal subunit protein uL30 (63 aa).

This sequence belongs to the universal ribosomal protein uL30 family. As to quaternary structure, part of the 50S ribosomal subunit.

The polypeptide is Large ribosomal subunit protein uL30 (Rickettsia felis (strain ATCC VR-1525 / URRWXCal2) (Rickettsia azadi)).